The following is a 91-amino-acid chain: UPF0250 protein NGO_0791 (91 aa).

The protein belongs to the UPF0250 family.

The protein is UPF0250 protein NGO_0791 of Neisseria gonorrhoeae (strain ATCC 700825 / FA 1090).